A 710-amino-acid polypeptide reads, in one-letter code: Iron-sulfur clusters transporter ATM1, mitochondrial (710 aa).

A mitochondrion-targeting transit peptide spans 1–38; sequence MWLSLPRSGYGSVATLTSKRVLACLTPLRQFSTSPAVS. Positions 35–52 are enriched in polar residues; sequence PAVSNANHKNVDNINKSP. The segment at 35–83 is disordered; sequence PAVSNANHKNVDNINKSPANDAANNAVEKGDKPTTSPEKLATKAEKSSA. The Mitochondrial matrix portion of the chain corresponds to 39–129; sequence NANHKNVDNI…PKGKTSVKFR (91 aa). Residues 130-151 traverse the membrane as a helical segment; sequence VLVAVALLVGAKLLNVQVPFFF. The 290-residue stretch at 130–419 folds into the ABC transmembrane type-1 domain; sequence VLVAVALLVG…LGSVYRDLRQ (290 aa). The Mitochondrial intermembrane portion of the chain corresponds to 152–173; sequence KEIIDDMNIEWNSATALGVGIT. Residues 174 to 197 traverse the membrane as a helical segment; the sequence is ALIFSYGAARFGAVLFGELRNAIF. The Mitochondrial matrix portion of the chain corresponds to 198 to 246; it reads ASVAQKAIKEVATNVFRHLLKLDMAFHLSRQTGGITRAIDRGTKGISFV. Residues 247–270 form a helical membrane-spanning segment; it reads LSSMVFHIIPIALEISLVCGILSY. A topological domain (mitochondrial intermembrane) is located at residue Asn-271. A helical membrane pass occupies residues 272-292; it reads FGWKYALVTGATMVSYAIFTI. Residues 293–358 are Mitochondrial matrix-facing; that stretch reads TTTSWRTKFR…ASIKIATSLA (66 aa). Glutathione is bound by residues 298–302 and 361–364; these read RTKFR and NSGQ. The helical transmembrane segment at 359-377 threads the bilayer; sequence FLNSGQNLIFSSALTAMMY. The Mitochondrial intermembrane portion of the chain corresponds to 378–392; it reads MTCCGVADGSLTVGD. A helical membrane pass occupies residues 393 to 414; it reads LVLVNQLVFQLSVPLNFLGSVY. Gly-411 contributes to the glutathione binding site. Topologically, residues 415 to 710 are mitochondrial matrix; sequence RDLRQSLLDM…AEEKAAKKDV (296 aa). Residues 453–687 enclose the ABC transporter domain; it reads IRFENVTYGY…DGLYKSMWDA (235 aa). ATP-binding positions include Tyr-462 and 486–497; that span reads GPSGSGKSTILK.

Belongs to the ABC transporter superfamily. ABCB family. Heavy Metal importer (TC 3.A.1.210) subfamily. As to quaternary structure, homodimer.

It is found in the mitochondrion inner membrane. Its function is as follows. Performs an essential function in the generation of cytoplasmic iron-sulfur proteins by mediating the ATP-dependent export of Fe/S cluster precursors synthesized by NFS1 and other mitochondrial proteins. Hydrolyzes ATP. Binds glutathione and may function by transporting a glutathione-conjugated iron-sulfur compound. The sequence is that of Iron-sulfur clusters transporter ATM1, mitochondrial from Yarrowia lipolytica (strain CLIB 122 / E 150) (Yeast).